The chain runs to 224 residues: Cytidylate kinase (224 aa).

10 to 18 is a binding site for ATP; sequence GPASAGKST.

This sequence belongs to the cytidylate kinase family. Type 1 subfamily.

The protein localises to the cytoplasm. It carries out the reaction CMP + ATP = CDP + ADP. The enzyme catalyses dCMP + ATP = dCDP + ADP. The chain is Cytidylate kinase from Leuconostoc mesenteroides subsp. mesenteroides (strain ATCC 8293 / DSM 20343 / BCRC 11652 / CCM 1803 / JCM 6124 / NCDO 523 / NBRC 100496 / NCIMB 8023 / NCTC 12954 / NRRL B-1118 / 37Y).